The following is a 167-amino-acid chain: Transcription antitermination protein NusB (167 aa).

Belongs to the NusB family.

In terms of biological role, involved in transcription antitermination. Required for transcription of ribosomal RNA (rRNA) genes. Binds specifically to the boxA antiterminator sequence of the ribosomal RNA (rrn) operons. The chain is Transcription antitermination protein NusB from Nitrosomonas europaea (strain ATCC 19718 / CIP 103999 / KCTC 2705 / NBRC 14298).